The primary structure comprises 75 residues: Protease B inhibitor 1 (75 aa).

At T74 the chain carries Phosphothreonine.

This sequence belongs to the protease inhibitor I9 family. Part of the heterodimeric LMA1 complex together with the thioredoxin II/TRX2. LMA1 binds to the ATPase SEC18.

The protein localises to the cytoplasm. The protein resides in the nucleus. In terms of biological role, cytosolic inhibitor of vacuolar proteinase B (yscB), probably regulating protease B activity during limited proteolysis. PBI2 is a component of the LMA1 complex, which is involved in the facilitation of vesicle fusion such as homotypic vacuole and ER-derived COPII vesicle fusion with the Golgi. This Saccharomyces cerevisiae (Baker's yeast) protein is Protease B inhibitor 1 (PBI2).